A 403-amino-acid polypeptide reads, in one-letter code: MTTAERTAPPDALTVPASRAPGCPFDPAPDVTEAARTEPVTRATLWDGSSCWLVTRHQDVRAVLGDPRFSADAHRTGFPFLTAGGREIIGTNPTFLRMDDPEHARLRRMLTADFIVKKVEAMRPEVQRLADDLVDRMTTGRTSADLVTEFALPLPSLVICLLLGVPYEDHAFFQERSRVLLTLRSTPEEVRAAQDELLEYLARLARTKRERPDDAIISRLVARGELDDTQIATMGRLLLVAGHETTANMTALSTLVLLRNPDQLARLRAEPALVKGAVEELLRYLTIVHNGVPRIATEDVLIGGRTIAAGEGVLCMISSANRDAEVFPGGDDLDVARDARRHVAFGFGVHQCLGQPLARVELQIAIETLLRRLPDLRLAVPHEEIPFRGDMAIYGVHSLPIAW.

The tract at residues 1 to 24 (MTTAERTAPPDALTVPASRAPGCP) is disordered. Position 352 (Cys-352) interacts with heme.

This sequence belongs to the cytochrome P450 family. Requires heme as cofactor.

Functionally, metabolism of a number of sulfonylurea herbicides. The chain is Cytochrome P450-SU2 (cyp105B1) from Streptomyces griseolus.